The sequence spans 468 residues: Methionine aminopeptidase 2 (468 aa).

Positions 63 to 74 (AAKEATKKDAKG) are enriched in basic and acidic residues. A disordered region spans residues 63-87 (AAKEATKKDAKGGKGKANGSAAATA). H219 contributes to the substrate binding site. The a divalent metal cation site is built by D239, D250, and H319. H327 is a substrate binding site. A divalent metal cation is bound by residues E352 and E449.

The protein belongs to the peptidase M24A family. Methionine aminopeptidase eukaryotic type 2 subfamily. The cofactor is Co(2+). Zn(2+) is required as a cofactor. It depends on Mn(2+) as a cofactor. Requires Fe(2+) as cofactor.

The protein resides in the cytoplasm. It catalyses the reaction Release of N-terminal amino acids, preferentially methionine, from peptides and arylamides.. With respect to regulation, inhibited by the fumagillin analog, TNP-470. Functionally, cotranslationally removes the N-terminal methionine from nascent proteins. The N-terminal methionine is often cleaved when the second residue in the primary sequence is small and uncharged (Met-Ala-, Cys, Gly, Pro, Ser, Thr, or Val). Required for germ cell proliferation and/or differentiation. The sequence is that of Methionine aminopeptidase 2 from Caenorhabditis elegans.